The primary structure comprises 325 residues: UPF0285 protein MA_3856 (325 aa).

This sequence belongs to the UPF0285 family.

The protein is UPF0285 protein MA_3856 of Methanosarcina acetivorans (strain ATCC 35395 / DSM 2834 / JCM 12185 / C2A).